We begin with the raw amino-acid sequence, 441 residues long: Xaa-Pro dipeptidase (441 aa).

Mn(2+) contacts are provided by D244, D255, H336, E381, and E420.

This sequence belongs to the peptidase M24B family. Bacterial-type prolidase subfamily. Mn(2+) serves as cofactor.

It catalyses the reaction Xaa-L-Pro dipeptide + H2O = an L-alpha-amino acid + L-proline. Splits dipeptides with a prolyl residue in the C-terminal position. The sequence is that of Xaa-Pro dipeptidase from Xanthomonas campestris pv. campestris (strain B100).